An 89-amino-acid chain; its full sequence is Protein FAM25A (89 aa).

This sequence belongs to the FAM25 family.

The polypeptide is Protein FAM25A (Homo sapiens (Human)).